The chain runs to 360 residues: NAD(P)H-quinone oxidoreductase subunit 1, chloroplastic (360 aa).

A run of 9 helical transmembrane segments spans residues 27–47, 98–118, 129–149, 165–185, 203–223, 248–268, 269–289, 297–317, and 340–360; these read IWIF…VLVI, FSIG…VIPF, IGIF…LMSG, AAQS…ISLL, FWGW…ISSL, YSGI…LISS, LFVT…ISIL, IFGT…FLFI, and FLLP…LFSL.

Belongs to the complex I subunit 1 family. As to quaternary structure, NDH is composed of at least 16 different subunits, 5 of which are encoded in the nucleus.

Its subcellular location is the plastid. The protein localises to the chloroplast thylakoid membrane. The catalysed reaction is a plastoquinone + NADH + (n+1) H(+)(in) = a plastoquinol + NAD(+) + n H(+)(out). It carries out the reaction a plastoquinone + NADPH + (n+1) H(+)(in) = a plastoquinol + NADP(+) + n H(+)(out). NDH shuttles electrons from NAD(P)H:plastoquinone, via FMN and iron-sulfur (Fe-S) centers, to quinones in the photosynthetic chain and possibly in a chloroplast respiratory chain. The immediate electron acceptor for the enzyme in this species is believed to be plastoquinone. Couples the redox reaction to proton translocation, and thus conserves the redox energy in a proton gradient. The sequence is that of NAD(P)H-quinone oxidoreductase subunit 1, chloroplastic from Nasturtium officinale (Watercress).